Here is a 174-residue protein sequence, read N- to C-terminus: Crossover junction endodeoxyribonuclease RuvC (174 aa).

Catalysis depends on residues Asp8, Glu69, and Asp141. Residues Asp8, Glu69, and Asp141 each coordinate Mg(2+).

It belongs to the RuvC family. As to quaternary structure, homodimer which binds Holliday junction (HJ) DNA. The HJ becomes 2-fold symmetrical on binding to RuvC with unstacked arms; it has a different conformation from HJ DNA in complex with RuvA. In the full resolvosome a probable DNA-RuvA(4)-RuvB(12)-RuvC(2) complex forms which resolves the HJ. Mg(2+) serves as cofactor.

It is found in the cytoplasm. It catalyses the reaction Endonucleolytic cleavage at a junction such as a reciprocal single-stranded crossover between two homologous DNA duplexes (Holliday junction).. Its function is as follows. The RuvA-RuvB-RuvC complex processes Holliday junction (HJ) DNA during genetic recombination and DNA repair. Endonuclease that resolves HJ intermediates. Cleaves cruciform DNA by making single-stranded nicks across the HJ at symmetrical positions within the homologous arms, yielding a 5'-phosphate and a 3'-hydroxyl group; requires a central core of homology in the junction. The consensus cleavage sequence is 5'-(A/T)TT(C/G)-3'. Cleavage occurs on the 3'-side of the TT dinucleotide at the point of strand exchange. HJ branch migration catalyzed by RuvA-RuvB allows RuvC to scan DNA until it finds its consensus sequence, where it cleaves and resolves the cruciform DNA. This chain is Crossover junction endodeoxyribonuclease RuvC, found in Xanthomonas oryzae pv. oryzae (strain PXO99A).